Consider the following 159-residue polypeptide: MSITGQPHVYKKDTIIRLKPLSLNSNNRSYVFSSSKGNIQNIINHLNNLNEIVGRSLLGIWRINSYFGLSKDPSESKSKNPSVFNTAKTIFKSGGVDYSSQLKEIKSLLEAQNTRIKNLENAIQSLDNKIQPEPLTKEEVKELKESINSIKEALKNIIG.

The protein belongs to the caulimoviridae ORF II family.

This protein is involved in virus transmission. The sequence is that of Aphid transmission protein from Cauliflower mosaic virus (strain PV147) (CaMV).